Here is a 751-residue protein sequence, read N- to C-terminus: Photosystem I P700 chlorophyll a apoprotein A1 (751 aa).

Transmembrane regions (helical) follow at residues 73–96, 159–182, 198–222, 294–312, 349–372, 388–414, 436–458, and 533–551; these read VFSAHFGQLGIIFIWLSGMYFHGA, LYSTAIGGLVMAAAMFFAGWFHFH, LNHHLSGLLGLGSLAWAGHQIHVSL, TAHHHLAIAVLFIVAGHMY, WHAQLAINLALFGSLSIIVAHHQY, LSLFTHHNWIGGFCIVGAAAHAAIFMI, AIISHLNWVCIFLGFHSFGLYIH, and FLVHHVHAFTIHVTVLILL. Positions 575 and 584 each coordinate [4Fe-4S] cluster. 2 helical membrane passes run 591–612 and 665–687; these read HVFLGLFWMYNAISVVIFHFSW and LSAYGLIFLGAHFVWAFSLMFLF. His676 is a binding site for chlorophyll a'. Chlorophyll a-binding residues include Met684 and Tyr692. Position 693 (Trp693) interacts with phylloquinone. A helical transmembrane segment spans residues 725 to 745; it reads AVGVAHYLLGGIATTWSFFLA.

The protein belongs to the PsaA/PsaB family. In terms of assembly, the PsaA/B heterodimer binds the P700 chlorophyll special pair and subsequent electron acceptors. PSI consists of a core antenna complex that captures photons, and an electron transfer chain that converts photonic excitation into a charge separation. The eukaryotic PSI reaction center is composed of at least 11 subunits. P700 is a chlorophyll a/chlorophyll a' dimer, A0 is one or more chlorophyll a, A1 is one or both phylloquinones and FX is a shared 4Fe-4S iron-sulfur center. is required as a cofactor.

The protein resides in the plastid. The protein localises to the chloroplast thylakoid membrane. It catalyses the reaction reduced [plastocyanin] + hnu + oxidized [2Fe-2S]-[ferredoxin] = oxidized [plastocyanin] + reduced [2Fe-2S]-[ferredoxin]. Its function is as follows. PsaA and PsaB bind P700, the primary electron donor of photosystem I (PSI), as well as the electron acceptors A0, A1 and FX. PSI is a plastocyanin/cytochrome c6-ferredoxin oxidoreductase, converting photonic excitation into a charge separation, which transfers an electron from the donor P700 chlorophyll pair to the spectroscopically characterized acceptors A0, A1, FX, FA and FB in turn. Oxidized P700 is reduced on the lumenal side of the thylakoid membrane by plastocyanin or cytochrome c6. This Tupiella akineta (Green alga) protein is Photosystem I P700 chlorophyll a apoprotein A1.